The primary structure comprises 518 residues: F-box protein At1g47056 (518 aa).

Residues 37 to 82 enclose the F-box domain; sequence PDYTSSLPDECLALVFQFLNSGNRKRCALVCRRWMIVEGQNRYRLS.

The sequence is that of F-box protein At1g47056 from Arabidopsis thaliana (Mouse-ear cress).